The chain runs to 390 residues: DNA polymerase IV (390 aa).

Residues 6 to 187 form the UmuC domain; that stretch reads VMHVDLDAFF…LDIAVMPGIG (182 aa). Mg(2+) contacts are provided by D10 and D105. The active site involves E106.

It belongs to the DNA polymerase type-Y family. As to quaternary structure, monomer. It depends on Mg(2+) as a cofactor.

It is found in the cytoplasm. The enzyme catalyses DNA(n) + a 2'-deoxyribonucleoside 5'-triphosphate = DNA(n+1) + diphosphate. Functionally, poorly processive, error-prone DNA polymerase involved in untargeted mutagenesis. Copies undamaged DNA at stalled replication forks, which arise in vivo from mismatched or misaligned primer ends. These misaligned primers can be extended by PolIV. Exhibits no 3'-5' exonuclease (proofreading) activity. May be involved in translesional synthesis, in conjunction with the beta clamp from PolIII. The chain is DNA polymerase IV from Dehalococcoides mccartyi (strain CBDB1).